Consider the following 774-residue polypeptide: Two pore channel protein 2 (774 aa).

Residues 1–92 (MEEEPLLAGS…GSLRLYRWYY (92 aa)) are Cytoplasmic-facing. A helical transmembrane segment spans residues 93–113 (SNLCQWGLGLTIAVVLALAFI). Topologically, residues 114–140 (ERPSSLTYTSDIRVKPKPWEPPCGMTE) are extracellular. Residues 141 to 161 (GIEIVCLCIFILDVTAKGYLI) traverse the membrane as a helical segment. Residues 162 to 170 (GWEEFRMNK) lie on the Cytoplasmic side of the membrane. Residues 171-191 (WLLAYLIVITASVIDWMLSIS) traverse the membrane as a helical segment. Residues 192-197 (MLCDEN) are Extracellular-facing. Residues 198–218 (LRVRRLIRPFFLLQNSSLMKK) form a helical membrane-spanning segment. The tract at residues 217–221 (KKTLK) is interaction with phosphatidylinositol 3,5-bisphosphate. Residues 219-232 (TLKCIKRTLPEIAS) are Cytoplasmic-facing. A helical transmembrane segment spans residues 233–253 (VILLLALHICLFTMIGMLIFA). Topologically, residues 254–267 (KSDDPKQNGEWQTY) are extracellular. An intramembrane region (helical; Pore-forming) is located at residues 268-292 (FRNLPKALSSLLVLLTTANNPDVMI). The Extracellular portion of the chain corresponds to 293–302 (PAYSLNRGYS). Residues 303 to 323 (IFFILFSVFGTYLLMNLMTAI) form a helical membrane-spanning segment. The Cytoplasmic portion of the chain corresponds to 324–452 (IYNQFRGYLL…YVYSHYYISV (129 aa)). The chain crosses the membrane as a helical span at residues 453-475 (LGNAVALANVICICTVLVLNAEK). At 476 to 486 (SASEKNYFYME) the chain is on the extracellular side. A helical transmembrane segment spans residues 487 to 507 (IINCIFILYYLIEMLLKIVAF). Topologically, residues 508 to 518 (GWKGYLSYRNN) are cytoplasmic. Residues 519–539 (IFDGFLTVLLLAIQIVIFITF) traverse the membrane as a helical segment. Residues 540-564 (KIPYVDVDPVPRHVMALWEMIRLVN) are Extracellular-facing. A helical transmembrane segment spans residues 565–585 (MLIVFRFLRIIPEIKLMAVVA). Topologically, residues 586–596 (STIVDLVKNLR) are cytoplasmic. Residues 597–617 (AFAGILLVVYYMFAVLGIWLF) traverse the membrane as a helical segment. The Extracellular portion of the chain corresponds to 618–658 (QGAISPPSNMSLVSNSSLENITGPYSMECGTFEQLEYWPNN). Residues asparagine 626, asparagine 632, and asparagine 637 are each glycosylated (N-linked (GlcNAc...) asparagine). The segment at residues 659–681 (FDDFASSLILLYNIMVVNNWHVF) is an intramembrane region (helical; Pore-forming). At 682 to 696 (TDAYARYTTDWSLVY) the chain is on the extracellular side. Residues 697–717 (FVVWWLTSSVMWVNLFVALIL) form a helical membrane-spanning segment. The Cytoplasmic segment spans residues 718-774 (ENFTYKWDRSNGLSVEDVERIAYQSTVQLMFKEHVKEPTEEELLAQLHQHPHLHLSW).

Belongs to the calcium channel alpha-1 subunit (TC 1.A.1.11) family. Two pore calcium channel subfamily. As to quaternary structure, homodimer. In terms of processing, N-glycosylated.

It localises to the late endosome membrane. It is found in the lysosome membrane. The enzyme catalyses Na(+)(in) = Na(+)(out). The catalysed reaction is Ca(2+)(in) = Ca(2+)(out). Its function is as follows. Intracellular channel initially characterized as a non-selective Ca(2+)-permeable channel activated by NAADP (nicotinic acid adenine dinucleotide phosphate), it is also a highly-selective Na(+) channel activated directly by PI(3,5)P2 (phosphatidylinositol 3,5-bisphosphate). Localizes to the lysosomal and late endosome membranes where it regulates organellar membrane excitability, membrane trafficking, and pH homeostasis. The polypeptide is Two pore channel protein 2 (tpcn2) (Danio rerio (Zebrafish)).